We begin with the raw amino-acid sequence, 360 residues long: 8-hydroxygeraniol dehydrogenase (360 aa).

7 residues coordinate Zn(2+): Cys-50, His-72, Cys-103, Cys-106, Cys-109, Cys-117, and Cys-166.

The protein belongs to the zinc-containing alcohol dehydrogenase family. Zn(2+) serves as cofactor. Present in seedlings and vascular tissues (at protein level). Restricted to the epidermis.

The catalysed reaction is (6E)-8-hydroxygeraniol + 2 NADP(+) = (6E)-8-oxogeranial + 2 NADPH + 2 H(+). Dehydrogenase involved in the biosynthesis of oxogeranial from hydroxygeraniol, a precursor of the terpenoid indole alkaloids such as vinblastine and vincristine. In Catharanthus roseus (Madagascar periwinkle), this protein is 8-hydroxygeraniol dehydrogenase (10HGO).